The chain runs to 469 residues: Beta-1,3-xylanase (469 aa).

Positions Met-1–Ala-22 are cleaved as a signal peptide. Residues Leu-23 to Asp-293 enclose the GH26 domain. Glu-138 acts as the Proton donor in catalysis. The active-site Nucleophile is Glu-234. The span at Asp-352 to Gly-374 shows a compositional bias: gly residues. Residues Asp-352–Glu-380 form a disordered region. A carbohydrate binding module (CBM) region spans residues Glu-377–Asn-469. Intrachain disulfides connect Cys-382–Cys-468 and Cys-413–Cys-418.

The protein belongs to the glycosyl hydrolase 26 family.

The catalysed reaction is Random hydrolysis of (1-&gt;3)-beta-D-glycosidic linkages in (1-&gt;3)-beta-D-xylans.. Its activity is regulated as follows. Completely inhibited by CuCl(2), FeCl(3), HgCl(2) and N-bromosuccinimide. Moderately inhibited by AgCl, AlCl(3), Pb(CH(3)COO)(2) and dithiothreitol. BaCl(2), CaCl(2), KCl, MgCl(2), MnCl(2), NaCl, ZnCl(2), ethylenediaminetetraacetic acid, N-ethylmaleimide, iodoacetic acid and p-chloromercuribenzoic acid have little or no effect on activity. In terms of biological role, catalyzes the hydrolysis of beta-1,3-xylan into oligosaccharides, mainly xylotriose and xylobiose with smaller amounts of xylotetraose, xylose, xylopentaose and xylohexaose. Does not hydrolyze xylobiose, p-nitrophenyl-beta-xyloside, beta-1,4-xylan, carboxymethylcellulose, curdlan, glucomannan or beta-1,4-mannan. This is Beta-1,3-xylanase from Alcaligenes sp.